Consider the following 671-residue polypeptide: DNA ligase (671 aa).

NAD(+) contacts are provided by residues Asp-31–Asp-35, Ser-80–Leu-81, and Glu-110. The active-site N6-AMP-lysine intermediate is Lys-112. NAD(+) is bound by residues Arg-133, Glu-167, Lys-283, and Lys-307. Cys-401, Cys-404, Cys-419, and Cys-424 together coordinate Zn(2+). Positions Glu-587 to Glu-671 constitute a BRCT domain.

This sequence belongs to the NAD-dependent DNA ligase family. LigA subfamily. Mg(2+) is required as a cofactor. Mn(2+) serves as cofactor.

It carries out the reaction NAD(+) + (deoxyribonucleotide)n-3'-hydroxyl + 5'-phospho-(deoxyribonucleotide)m = (deoxyribonucleotide)n+m + AMP + beta-nicotinamide D-nucleotide.. Its function is as follows. DNA ligase that catalyzes the formation of phosphodiester linkages between 5'-phosphoryl and 3'-hydroxyl groups in double-stranded DNA using NAD as a coenzyme and as the energy source for the reaction. It is essential for DNA replication and repair of damaged DNA. This Listeria monocytogenes serotype 4b (strain CLIP80459) protein is DNA ligase.